A 201-amino-acid polypeptide reads, in one-letter code: MSRYTGPSWRLSRRLGVSLSGTGKELARRPYAPGDHGNDRRGKLSEYGTQLREKQKLRFMYGMTERQFSNLFVRAGKIKEGTHGTNFMVLLERRLDNMVYRLGLATTRRQARQLVNHGHITVDGKRVDIPSYEVKVGQVIAVREKSKNLDVIKGAVEAVVARPAYVEFDADKLEGKLTRLPQREDMNADIDEALIVEFYNK.

The disordered stretch occupies residues 22–47 (TGKELARRPYAPGDHGNDRRGKLSEY). Residues 93-153 (RRLDNMVYRL…EKSKNLDVIK (61 aa)) form the S4 RNA-binding domain.

The protein belongs to the universal ribosomal protein uS4 family. In terms of assembly, part of the 30S ribosomal subunit. Contacts protein S5. The interaction surface between S4 and S5 is involved in control of translational fidelity.

One of the primary rRNA binding proteins, it binds directly to 16S rRNA where it nucleates assembly of the body of the 30S subunit. Functionally, with S5 and S12 plays an important role in translational accuracy. In Limosilactobacillus fermentum (strain NBRC 3956 / LMG 18251) (Lactobacillus fermentum), this protein is Small ribosomal subunit protein uS4.